The chain runs to 234 residues: tRNA1(Val) (adenine(37)-N6)-methyltransferase (234 aa).

Belongs to the methyltransferase superfamily. tRNA (adenine-N(6)-)-methyltransferase family.

It localises to the cytoplasm. It catalyses the reaction adenosine(37) in tRNA1(Val) + S-adenosyl-L-methionine = N(6)-methyladenosine(37) in tRNA1(Val) + S-adenosyl-L-homocysteine + H(+). Its function is as follows. Specifically methylates the adenine in position 37 of tRNA(1)(Val) (anticodon cmo5UAC). This Phocaeicola vulgatus (strain ATCC 8482 / DSM 1447 / JCM 5826 / CCUG 4940 / NBRC 14291 / NCTC 11154) (Bacteroides vulgatus) protein is tRNA1(Val) (adenine(37)-N6)-methyltransferase.